The sequence spans 518 residues: Retinal dehydrogenase 2 (518 aa).

Position 168 is a phosphotyrosine (tyrosine 168). NAD(+) is bound by residues 184–186, 210–213, and 264–266; these read IPW, KPAE, and STE. Glutamate 286 acts as the Proton acceptor in catalysis. Cysteine 320 functions as the Nucleophile in the catalytic mechanism. Serine 351 is subject to Phosphoserine. Residues 366-370 and glutamate 417 contribute to the NAD(+) site; that span reads KQYNK.

It belongs to the aldehyde dehydrogenase family. Homotetramer.

It is found in the cytoplasm. The enzyme catalyses retinal + NAD(+) + H2O = retinoate + NADH + 2 H(+). It carries out the reaction all-trans-retinal + NAD(+) + H2O = all-trans-retinoate + NADH + 2 H(+). It catalyses the reaction all-trans-13,14-dihydroretinal + NAD(+) + H2O = all-trans-13,14-dihydroretinoate + NADH + 2 H(+). The protein operates within cofactor metabolism; retinol metabolism. Its function is as follows. Catalyzes the NAD-dependent oxidation of aldehyde substrates, such as all-trans-retinal and all-trans-13,14-dihydroretinal, to their corresponding carboxylic acids, all-trans-retinoate and all-trans-13,14-dihydroretinoate, respectively. Retinoate signaling is critical for the transcriptional control of many genes, for instance it is crucial for initiation of meiosis in both male and female. Recognizes retinal as substrate, both in its free form and when bound to cellular retinol-binding protein. Can metabolize octanal and decanal, but has only very low activity with benzaldehyde, acetaldehyde and propanal. Displays complete lack of activity with citral. This Homo sapiens (Human) protein is Retinal dehydrogenase 2 (ALDH1A2).